A 726-amino-acid chain; its full sequence is ORC ubiquitin ligase 1 (726 aa).

The RING-type; degenerate zinc-finger motif lies at 18–56 (CHICLGKVRQPVICINNHVFCSICIDLWLKNNSQCPACR). Coiled-coil stretches lie at residues 87 to 129 (LRKT…TILD) and 155 to 270 (ETVA…MNSI). Phosphoserine is present on S210. A disordered region spans residues 274 to 335 (ALPADGKGSK…ARQESTSKAE (62 aa)). Positions 280–290 (KGSKGSEEDVA) are enriched in basic and acidic residues. A compositionally biased stretch (low complexity) spans 300–320 (KQPSSSTSSSSHLAKPSSSRL). Residues 321 to 334 (CDTSSARQESTSKA) are compositionally biased toward polar residues. 7 positions are modified to phosphoserine: S526, S553, S561, S568, S570, S719, and S721. Residues 687 to 726 (QSPWSTSFVPEKRNKNVNQSTKRKIQSSLSNASPSKATKS) form a disordered region. The segment covering 702 to 726 (NVNQSTKRKIQSSLSNASPSKATKS) has biased composition (polar residues).

As to quaternary structure, associates with ORC complex. Binds to chromatin; association is cell cycle-regulated, absent from mitotic chromosomes, is associated with chromatin from G1 and partially released from chromatin from mid S-phase. Post-translationally, auto-ubiquitinated.

Its subcellular location is the chromosome. The enzyme catalyses S-ubiquitinyl-[E2 ubiquitin-conjugating enzyme]-L-cysteine + [acceptor protein]-L-lysine = [E2 ubiquitin-conjugating enzyme]-L-cysteine + N(6)-ubiquitinyl-[acceptor protein]-L-lysine.. In terms of biological role, E3 ubiquitin ligase essential for DNA replication origin activation during S phase. Acts as a replication origin selector which selects the origins to be fired and catalyzes the multi-mono-ubiquitination of a subset of chromatin-bound ORC3 and ORC5 during S-phase. This is ORC ubiquitin ligase 1 (OBI1) from Pongo abelii (Sumatran orangutan).